Here is a 399-residue protein sequence, read N- to C-terminus: S-adenosylmethionine synthase (399 aa).

ATP is bound at residue His-15. Asp-17 provides a ligand contact to Mg(2+). Glu-43 is a binding site for K(+). 2 residues coordinate L-methionine: Glu-56 and Gln-99. The tract at residues 99-109 is flexible loop; it reads QSPDIARGVNR. Residues 166–168, 232–233, Asp-241, 247–248, Ala-264, and Lys-268 each bind ATP; these read DAK, RF, and RK. Asp-241 serves as a coordination point for L-methionine. Lys-272 contacts L-methionine.

This sequence belongs to the AdoMet synthase family. Homotetramer; dimer of dimers. Mg(2+) serves as cofactor. Requires K(+) as cofactor.

It localises to the cytoplasm. The enzyme catalyses L-methionine + ATP + H2O = S-adenosyl-L-methionine + phosphate + diphosphate. The protein operates within amino-acid biosynthesis; S-adenosyl-L-methionine biosynthesis; S-adenosyl-L-methionine from L-methionine: step 1/1. Functionally, catalyzes the formation of S-adenosylmethionine (AdoMet) from methionine and ATP. The overall synthetic reaction is composed of two sequential steps, AdoMet formation and the subsequent tripolyphosphate hydrolysis which occurs prior to release of AdoMet from the enzyme. In Nitrosospira multiformis (strain ATCC 25196 / NCIMB 11849 / C 71), this protein is S-adenosylmethionine synthase.